Consider the following 570-residue polypeptide: Sulfite reductase [NADPH] hemoprotein beta-component (570 aa).

Residues C434, C440, C479, and C483 each contribute to the [4Fe-4S] cluster site. A siroheme-binding site is contributed by C483.

Belongs to the nitrite and sulfite reductase 4Fe-4S domain family. As to quaternary structure, alpha(8)-beta(8). The alpha component is a flavoprotein, the beta component is a hemoprotein. Siroheme is required as a cofactor. [4Fe-4S] cluster serves as cofactor.

The catalysed reaction is hydrogen sulfide + 3 NADP(+) + 3 H2O = sulfite + 3 NADPH + 4 H(+). The protein operates within sulfur metabolism; hydrogen sulfide biosynthesis; hydrogen sulfide from sulfite (NADPH route): step 1/1. Its function is as follows. Component of the sulfite reductase complex that catalyzes the 6-electron reduction of sulfite to sulfide. This is one of several activities required for the biosynthesis of L-cysteine from sulfate. The sequence is that of Sulfite reductase [NADPH] hemoprotein beta-component from Escherichia coli (strain ATCC 8739 / DSM 1576 / NBRC 3972 / NCIMB 8545 / WDCM 00012 / Crooks).